The chain runs to 487 residues: Probable glutamate receptor (487 aa).

The first 23 residues, 1–23 (MDKGQHFVFFVLTTVLLLRESSH), serve as a signal peptide directing secretion. Topologically, residues 24 to 169 (AGAMRNDAAA…FFHFLAPFSK (146 aa)) are extracellular. N-linked (GlcNAc...) asparagine glycosylation occurs at Asn-104. The helical transmembrane segment at 170–190 (ETWTGLLFAYILTCFCLFLVA) threads the bilayer. Residues 191–235 (RLSPCEWNEPKNEENHFTFLNSLWFGAGALALQGVTPRPKALSVR) are Cytoplasmic-facing. The chain crosses the membrane as a helical span at residues 236-256 (VIAAIWWLFTIALLAAYIANF). Over 257–419 (TALLSSGSEQ…ERWSPLQPQA (163 aa)) the chain is Extracellular. The chain crosses the membrane as a helical span at residues 420-440 (LGGLFLTLAIGLALGVIAAVV). The Cytoplasmic segment spans residues 441 to 487 (ELSNKSRHAAGHVKKSCCSIFTEEMCTRLRIKENTRQSQETSGRANA).

Belongs to the glutamate-gated ion channel (TC 1.A.10.1) family.

Its subcellular location is the cell membrane. The protein resides in the postsynaptic cell membrane. Its function is as follows. Receptor for glutamate. L-glutamate acts as an excitatory neurotransmitter at many synapses in the central nervous system. The postsynaptic actions of Glu are mediated by a variety of receptors that are named according to their selective agonists. The sequence is that of Probable glutamate receptor (KBP) from Anas platyrhynchos (Mallard).